Here is a 201-residue protein sequence, read N- to C-terminus: Anthranilate synthase component II (201 aa).

The Glutamine amidotransferase type-1 domain occupies 3-196 (DILLLDNIDS…LAWAQRKLEP (194 aa)). Residue 57 to 59 (GPG) participates in L-glutamine binding. Catalysis depends on C84, which acts as the Nucleophile; for GATase activity. L-glutamine is bound by residues Q88 and 134-135 (SL). Residues H170 and E172 each act as for GATase activity in the active site.

As to quaternary structure, tetramer of two components I and two components II.

The catalysed reaction is chorismate + L-glutamine = anthranilate + pyruvate + L-glutamate + H(+). It catalyses the reaction N-(5-phospho-beta-D-ribosyl)anthranilate + diphosphate = 5-phospho-alpha-D-ribose 1-diphosphate + anthranilate. It functions in the pathway amino-acid biosynthesis; L-tryptophan biosynthesis; L-tryptophan from chorismate: step 1/5. Its pathway is amino-acid biosynthesis; L-tryptophan biosynthesis; L-tryptophan from chorismate: step 2/5. In Shigella dysenteriae, this protein is Anthranilate synthase component II (trpG-TRPD).